Here is a 719-residue protein sequence, read N- to C-terminus: Polyphosphate kinase (719 aa).

Asn47 provides a ligand contact to ATP. Mg(2+) contacts are provided by Arg377 and Arg407. His437 (phosphohistidine intermediate) is an active-site residue. Residues Tyr470, Arg566, and His594 each coordinate ATP.

This sequence belongs to the polyphosphate kinase 1 (PPK1) family. It depends on Mg(2+) as a cofactor. In terms of processing, an intermediate of this reaction is the autophosphorylated ppk in which a phosphate is covalently linked to a histidine residue through a N-P bond.

The catalysed reaction is [phosphate](n) + ATP = [phosphate](n+1) + ADP. Functionally, catalyzes the reversible transfer of the terminal phosphate of ATP to form a long-chain polyphosphate (polyP). This chain is Polyphosphate kinase, found in Exiguobacterium sibiricum (strain DSM 17290 / CCUG 55495 / CIP 109462 / JCM 13490 / 255-15).